Consider the following 451-residue polypeptide: AAA-ATPase At3g50940 (451 aa).

The signal sequence occupies residues M1–A25. G254–S261 lines the ATP pocket.

It belongs to the AAA ATPase family. BCS1 subfamily. Mg(2+) is required as a cofactor.

The enzyme catalyses ATP + H2O = ADP + phosphate + H(+). The sequence is that of AAA-ATPase At3g50940 from Arabidopsis thaliana (Mouse-ear cress).